The chain runs to 49 residues: Large ribosomal subunit protein bL33 (49 aa).

Belongs to the bacterial ribosomal protein bL33 family.

This is Large ribosomal subunit protein bL33 from Clostridioides difficile (strain 630) (Peptoclostridium difficile).